The primary structure comprises 68 residues: Tau-scoloptoxin(04)-Ssm1b (68 aa).

Residues 1–25 (MLKSFCILSVFMVLFLAKFPDLCSG) form the signal peptide. Residues 26 to 36 (EEISPLKIVVR) constitute a propeptide that is removed on maturation. 2 cysteine pairs are disulfide-bonded: Cys45–Cys56 and Cys50–Cys63. Residues 55–67 (RCSIVDKQCIKKE) are highly charged C-terminal region, binds to TRPV1 channel.

This sequence belongs to the scoloptoxin-04 family. Expressed by the venom gland.

It is found in the secreted. Functionally, extremely potent agonist and potentiator of TRPV1 (EC(50)=470-521.5 nM (mouse)). It strongly promotes the heat activation process by downshifting the activation threshold temperature. It preferably binds to the activated channel and promotes its opening. Holding the channel closed by cooling prevents binding of this toxin, leaving it ineffective. The toxin binds to the charge-rich outer pore region of the channel where it directly interacts with the pore helix and turret, two adjacent structural elements known to be critical for activation gating of TRPV1. In comparison with Sm1b, induces a TRPV1 desensitization with slower kinetics (20 seconds). In vivo, induces pain in mice after intraplantar injection. In terms of biological role, potent agonist and probable potentiator of TRPV1 (EC(50)=38.35 uM (mouse)). Also binds to the outer pore region of TRPV1. In comparison with Sm1a, induces a TRPV1 desensitization with faster kinetics (2 seconds) and leads to a more complete TRPV1 desensitization. Desensitization is achieved by reducing both the open probability and the single-channel conductance upon prolonged exposure. This chain is Tau-scoloptoxin(04)-Ssm1b, found in Scolopendra mutilans (Chinese red-headed centipede).